Here is a 381-residue protein sequence, read N- to C-terminus: 3-dehydroquinate synthase (381 aa).

NAD(+)-binding positions include glutamate 81–lysine 86, glycine 115–aspartate 119, threonine 139–serine 140, lysine 152, and lysine 161. Residues glutamate 194, histidine 256, and histidine 274 each contribute to the Zn(2+) site.

Belongs to the sugar phosphate cyclases superfamily. Dehydroquinate synthase family. Co(2+) serves as cofactor. It depends on Zn(2+) as a cofactor. Requires NAD(+) as cofactor.

It is found in the cytoplasm. The catalysed reaction is 7-phospho-2-dehydro-3-deoxy-D-arabino-heptonate = 3-dehydroquinate + phosphate. It participates in metabolic intermediate biosynthesis; chorismate biosynthesis; chorismate from D-erythrose 4-phosphate and phosphoenolpyruvate: step 2/7. In terms of biological role, catalyzes the conversion of 3-deoxy-D-arabino-heptulosonate 7-phosphate (DAHP) to dehydroquinate (DHQ). The sequence is that of 3-dehydroquinate synthase from Rhodopseudomonas palustris (strain BisA53).